A 545-amino-acid chain; its full sequence is Cytosolic Fe-S cluster assembly factor NAR1 (545 aa).

Residues C20, C72, C75, C78, C186, and C241 each contribute to the [4Fe-4S] cluster site. The tract at residues 401 to 438 is disordered; it reads PSTKQTSTVKANPLASRRRARLASKTDGTASSNNATQD. Polar residues predominate over residues 426 to 438; sequence TDGTASSNNATQD. The [4Fe-4S] cluster site is built by C453 and C457.

This sequence belongs to the NARF family.

In terms of biological role, component of the cytosolic Fe/S protein assembly machinery. Required for maturation of extramitochondrial Fe/S proteins. May play a role in the transfer of pre-assembled Fe/S clusters to target apoproteins. This chain is Cytosolic Fe-S cluster assembly factor NAR1 (NAR1), found in Debaryomyces hansenii (strain ATCC 36239 / CBS 767 / BCRC 21394 / JCM 1990 / NBRC 0083 / IGC 2968) (Yeast).